Reading from the N-terminus, the 409-residue chain is Short chain dehydrogenase sirS (409 aa).

6 residues coordinate NADP(+): V49, L68, K195, V288, T290, and A299. Residues 306–332 (GVGPEGAGEEEGKGEAEGGAKGATGWS) are disordered.

It belongs to the short-chain dehydrogenases/reductases (SDR) family. Highly divergent.

It functions in the pathway mycotoxin biosynthesis. In terms of biological role, short chain dehydrogenase; part of the gene cluster that mediates the biosynthesis of sirodesmin PL, an epipolythiodioxopiperazine (ETP) characterized by a disulfide bridged cyclic dipeptide and that acts as a phytotoxin which is involved in the blackleg didease of canola. SirD catalyzes the O-prenylation of L-tyrosine (L-Tyr) in the presence of dimethylallyl diphosphate (DMAPP) to yield 4-O-dimethylallyl-L-Tyr, and therefore represents probably the first pathway-specific enzyme in the biosynthesis of sirodesmin PL. 4-O-dimethylallyl-L-Tyr, then undergoes condensation with L-Ser in a reaction catalyzed by the non-ribosomal peptide synthase sirP to form the diketopiperazine (DKP) backbone. Further bishydroxylation of the DKP performed by the cytochrome P450 monooxygenase sirC leads to the production of the intermediate phomamide. This step is essential to form the reactive thiol group required for toxicity of sirodesmin PL. The next steps of sirodesmin biosynthesis are not well understood yet, but some predictions could be made from intermediate compounds identification. Phomamide is converted into phomalizarine via oxidation, probably by sirT. Further oxidation, methylation (by sirM or sirN) and reduction steps convert phomalizarine to deacetyl sirodesmin. Finally, acetyltransferase sirH probably acetylates deacetyl sirodesmin to produce sirodesmin PL. The chain is Short chain dehydrogenase sirS from Leptosphaeria maculans (Blackleg fungus).